We begin with the raw amino-acid sequence, 692 residues long: uncharacterized protein (692 aa).

Response regulatory domains follow at residues 9 to 130 and 139 to 255; these read RVLY…LRMC and RILI…EYRM. 4-aspartylphosphate is present on residues Asp-58 and Asp-188. Positions 299-432 constitute a GGDEF domain; the sequence is GVHGLVIIDV…GGNQAHVWSA (134 aa). The 249-residue stretch at 443–691 folds into the EAL domain; sequence ESVIKRLVST…SFDFQHMSHD (249 aa).

This is an uncharacterized protein from Thiocystis violacea.